Consider the following 501-residue polypeptide: MDTLLKTPNKLDFFIPQFHGFERLCSNNPYHSRVRLGVKKRAIKIVSSVVSGSAALLDLVPETKKENLDFELPLYDTSKSQVVDLAIVGGGPAGLAVAQQVSEAGLSVCSIDPSPKLIWPNNYGVWVDEFEAMDLLDCLDTTWSGAVVYVDEGVKKDLSRPYGRVNRKQLKSKMLQKCITNGVKFHQSKVTNVVHEEANSTVVCSDGVKIQASVVLDATGFSRCLVQYDKPYNPGYQVAYGIVAEVDGHPFDVDKMVFMDWRDKHLDSYPELKERNSKIPTFLYAMPFSSNRIFLEETSLVARPGLRMEDIQERMAARLKHLGINVKRIEEDERCVIPMGGPLPVLPQRVVGIGGTAGMVHPSTGYMVARTLAAAPIVANAIVRYLGSPSSNSLRGDQLSAEVWRDLWPIERRRQREFFCFGMDILLKLDLDATRRFFDAFFDLQPHYWHGFLSSRLFLPELLVFGLSLFSHASNTSRLEIMTKGTVPLAKMINNLVQDRD.

A chloroplast-targeting transit peptide spans methionine 1–serine 48. An N-acetylvaline modification is found at valine 49. Leucine 85–proline 113 serves as a coordination point for NAD(+).

This sequence belongs to the lycopene cyclase family.

It localises to the plastid. It is found in the chloroplast. The catalysed reaction is a carotenoid psi-end group = a carotenoid beta-end derivative. The protein operates within carotenoid biosynthesis; beta-carotene biosynthesis. Its pathway is carotenoid biosynthesis; beta-zeacarotene biosynthesis. Functionally, involved in carotenoid biosynthesis. Catalyzes the double cyclization reaction which converts lycopene to beta-carotene and neurosporene to beta-zeacarotene. Major lycopene beta-cyclase that does not seem to be involved in neoxanthin synthesis. Involved in salt tolerance improvement by increasing synthesis of carotenoids, which impairs reactive oxygen species (ROS) and protects the photosynthetic system under salt stress. In Arabidopsis thaliana (Mouse-ear cress), this protein is Lycopene beta cyclase, chloroplastic.